Here is a 722-residue protein sequence, read N- to C-terminus: Fatty acid oxidation complex subunit alpha (722 aa).

Residues 1 to 189 form an enoyl-CoA hydratase/isomerase region; the sequence is MIYQGKSLSA…AQGAIDAVVE (189 aa). Asp296 contributes to the substrate binding site. Residues 311-722 are 3-hydroxyacyl-CoA dehydrogenase; that stretch reads TKAVNKAAVL…SYFTTDVKLA (412 aa). NAD(+) contacts are provided by residues Met325, Asp344, 401–403, Lys408, and Ser430; that span reads VVE. The active-site For 3-hydroxyacyl-CoA dehydrogenase activity is the His451. NAD(+) is bound at residue Asn454. Residues Asn501 and Tyr661 each contribute to the substrate site.

In the N-terminal section; belongs to the enoyl-CoA hydratase/isomerase family. It in the C-terminal section; belongs to the 3-hydroxyacyl-CoA dehydrogenase family. As to quaternary structure, heterotetramer of two alpha chains (FadB) and two beta chains (FadA).

It carries out the reaction a (3S)-3-hydroxyacyl-CoA + NAD(+) = a 3-oxoacyl-CoA + NADH + H(+). The enzyme catalyses a (3S)-3-hydroxyacyl-CoA = a (2E)-enoyl-CoA + H2O. It catalyses the reaction a 4-saturated-(3S)-3-hydroxyacyl-CoA = a (3E)-enoyl-CoA + H2O. The catalysed reaction is (3S)-3-hydroxybutanoyl-CoA = (3R)-3-hydroxybutanoyl-CoA. It carries out the reaction a (3Z)-enoyl-CoA = a 4-saturated (2E)-enoyl-CoA. The enzyme catalyses a (3E)-enoyl-CoA = a 4-saturated (2E)-enoyl-CoA. It participates in lipid metabolism; fatty acid beta-oxidation. Its function is as follows. Involved in the aerobic and anaerobic degradation of long-chain fatty acids via beta-oxidation cycle. Catalyzes the formation of 3-oxoacyl-CoA from enoyl-CoA via L-3-hydroxyacyl-CoA. It can also use D-3-hydroxyacyl-CoA and cis-3-enoyl-CoA as substrate. The protein is Fatty acid oxidation complex subunit alpha of Colwellia psychrerythraea (strain 34H / ATCC BAA-681) (Vibrio psychroerythus).